The primary structure comprises 272 residues: Phytolongin Phyl2.2 (272 aa).

The 105-residue stretch at 12-116 folds into the Longin domain; it reads CIAKGTVVLA…LINPVSHCLQ (105 aa). The chain crosses the membrane as a helical; Anchor for type IV membrane protein span at residues 243–263; that stretch reads WVVLMFDFCICAVLFGIWLWI.

Belongs to the synaptobrevin family.

It localises to the membrane. In terms of biological role, non-SNARE longin protein involved in membrane-trafficking machinery. This is Phytolongin Phyl2.2 from Arabidopsis thaliana (Mouse-ear cress).